Consider the following 642-residue polypeptide: Threonine--tRNA ligase (642 aa).

Positions 1–61 (MPIITLPDGS…EQDSQLAIIT (61 aa)) constitute a TGS domain. Residues 243-534 (DHRKIGKQLD…LTEEYAGFFP (292 aa)) are catalytic. Residues Cys-334, His-385, and His-511 each contribute to the Zn(2+) site.

This sequence belongs to the class-II aminoacyl-tRNA synthetase family. In terms of assembly, homodimer. Requires Zn(2+) as cofactor.

The protein resides in the cytoplasm. It catalyses the reaction tRNA(Thr) + L-threonine + ATP = L-threonyl-tRNA(Thr) + AMP + diphosphate + H(+). In terms of biological role, catalyzes the attachment of threonine to tRNA(Thr) in a two-step reaction: L-threonine is first activated by ATP to form Thr-AMP and then transferred to the acceptor end of tRNA(Thr). Also edits incorrectly charged L-seryl-tRNA(Thr). The chain is Threonine--tRNA ligase from Proteus mirabilis (strain HI4320).